Consider the following 299-residue polypeptide: 4-diphosphocytidyl-2-C-methyl-D-erythritol kinase (299 aa).

Lys19 is an active-site residue. Residue 110-120 coordinates ATP; sequence PVASGIGGGSA. Asp152 is a catalytic residue.

The protein belongs to the GHMP kinase family. IspE subfamily.

The enzyme catalyses 4-CDP-2-C-methyl-D-erythritol + ATP = 4-CDP-2-C-methyl-D-erythritol 2-phosphate + ADP + H(+). It functions in the pathway isoprenoid biosynthesis; isopentenyl diphosphate biosynthesis via DXP pathway; isopentenyl diphosphate from 1-deoxy-D-xylulose 5-phosphate: step 3/6. In terms of biological role, catalyzes the phosphorylation of the position 2 hydroxy group of 4-diphosphocytidyl-2C-methyl-D-erythritol. The sequence is that of 4-diphosphocytidyl-2-C-methyl-D-erythritol kinase from Agrobacterium fabrum (strain C58 / ATCC 33970) (Agrobacterium tumefaciens (strain C58)).